A 748-amino-acid chain; its full sequence is E3 ubiquitin-protein ligase SMURF2 (748 aa).

Residues 1–119 form the C2 domain; the sequence is MSNPGGRRNG…TGYQRLDLCK (119 aa). A Glycyl lysine isopeptide (Lys-Gly) (interchain with G-Cter in ubiquitin) cross-link involves residue K119. WW domains lie at 157 to 190, 251 to 284, and 297 to 330; these read NDLPDGWEERRTASGRIQYLNHITRTTQWERPTR, PDLPEGYEQRTTQQGQVYFLHTQTGVSTWHDPRV, and GPLPPGWEIRNTATGRVYFVDHNNRTTQFTDPRL. One can recognise an HECT domain in the interval 414-748; it reads RPKDLWKRLM…IEETCGFAVE (335 aa). C716 serves as the catalytic Glycyl thioester intermediate.

Interacts (via WW domains) with SMAD1. Interacts (via WW domains) with SMAD2 (via PY-motif). Interacts (via WW domains) with SMAD3 (via PY-motif). Interacts with SMAD6. Interacts with SMAD7 (via PY-motif) and TGFBR1; SMAD7 recruits SMURF2 to the TGF-beta receptor and regulates its degradation. Does not interact with SMAD4; SMAD4 lacks a PY-motif. Interacts with AIMP1. Interacts with SNON. Interacts with STAMBP and RNF11. May interact with NDFIP1 and NDFIP2; this interaction induces the E3 ubiquitin-protein ligase activity. Interacts with TTC3. In terms of assembly, (Microbial infection) Interacts (via WW domains) with EBOV and MARV VP40 (via PPXY motif); the interaction facilitates VP40 virus-like particle budding. Post-translationally, auto-ubiquitinated and ubiquitinated in the presence of RNF11 and UBE2D1. Ubiquitinated by the SCF(FBXL15) complex and TTC3, leading to its degradation by the proteasome. 'Lys-48'-linked polyubiquitination mediated by TRAF4 at Lys-119 leads to SMURF2 proteasomal degradation. In terms of tissue distribution, widely expressed.

The protein resides in the nucleus. Its subcellular location is the cytoplasm. It localises to the cell membrane. It is found in the membrane raft. It catalyses the reaction S-ubiquitinyl-[E2 ubiquitin-conjugating enzyme]-L-cysteine + [acceptor protein]-L-lysine = [E2 ubiquitin-conjugating enzyme]-L-cysteine + N(6)-ubiquitinyl-[acceptor protein]-L-lysine.. The protein operates within protein modification; protein ubiquitination. Activated by NDFIP1- and NDFIP2-binding. Functionally, E3 ubiquitin-protein ligase which accepts ubiquitin from an E2 ubiquitin-conjugating enzyme in the form of a thioester and then directly transfers the ubiquitin to targeted substrates. Interacts with SMAD7 to trigger SMAD7-mediated transforming growth factor beta/TGF-beta receptor ubiquitin-dependent degradation, thereby down-regulating TGF-beta signaling. In addition, interaction with SMAD7 activates autocatalytic degradation, which is prevented by interaction with AIMP1. Also forms a stable complex with TGF-beta receptor-mediated phosphorylated SMAD1, SMAD2 and SMAD3, and targets SMAD1 and SMAD2 for ubiquitination and proteasome-mediated degradation. SMAD2 may recruit substrates, such as SNON, for ubiquitin-dependent degradation. Negatively regulates TGFB1-induced epithelial-mesenchymal transition and myofibroblast differentiation. In terms of biological role, (Microbial infection) In case of filoviruses Ebola/EBOV and Marburg/MARV infection, the complex formed by viral matrix protein VP40 and SMURF2 facilitates virus budding. This is E3 ubiquitin-protein ligase SMURF2 from Homo sapiens (Human).